Reading from the N-terminus, the 647-residue chain is LIM domain kinase 1 (647 aa).

LIM zinc-binding domains lie at 25 to 75 and 84 to 137; these read CASC…CKKD and CHGC…CGQC. The region spanning 165 to 258 is the PDZ domain; the sequence is LVSIPASAHG…LLQLTLEHDP (94 aa). At serine 210 the chain carries Phosphoserine. Threonine 229 carries the phosphothreonine modification. Residues 256–316 are disordered; the sequence is HDPHDSLGHG…SLVSPASQRK (61 aa). The span at 278–289 shows a compositional bias: polar residues; the sequence is HTPSGQAGSSAR. Phosphoserine is present on residues serine 298, serine 302, serine 307, and serine 310. At serine 323 the chain carries Phosphoserine; by MAPKAPK2. Serine 337 is modified (phosphoserine). The Protein kinase domain occupies 339-604; that stretch reads LIHGEVLGKG…PSFVKLEQWL (266 aa). ATP is bound by residues 345 to 353 and lysine 368; that span reads LGKGCFGQA. The active site involves aspartate 460. Threonine 508 carries the phosphothreonine; by ROCK1 and PAK1 modification.

Belongs to the protein kinase superfamily. TKL Ser/Thr protein kinase family. Interacts (via LIM domain) with the cytoplasmic domain of NRG1. Interacts with NISCH. Interacts with RLIM and RNF6. Self-associates to form homodimers. Interacts with HSP90AA1; this interaction promotes LIMK1 dimerization and subsequent transphosphorylation. Interacts with CDKN1C. Interacts with SSH1. Interacts with ROCK1. Interacts (via LIM zinc-binding domains) with FAM89B/LRAP25 (via LRR repeat). Forms a tripartite complex with CDC42BPA, CDC42BPB and FAM89B/LRAP25. Post-translationally, autophosphorylated. Phosphorylated on Thr-508 by ROCK1 and PAK1, resulting in activation. Phosphorylated by PAK4 which increases the ability of LIMK1 to phosphorylate cofilin. Phosphorylated at Ser-323 by MAPKAPK2 during activation of VEGFA-induced signaling, which results in activation of LIMK1 and promotion of actin reorganization, cell migration, and tubule formation of endothelial cells. Dephosphorylated and inactivated by SSH1. Phosphorylated by CDC42BP. In terms of processing, ubiquitinated. 'Lys-48'-linked polyubiquitination by RNF6 leads to proteasomal degradation through the 26S proteasome, modulating LIMK1 levels in the growth cone and its effect on axonal outgrowth. Also polyubiquitinated by RLIM.

The protein localises to the cytoplasm. It localises to the nucleus. Its subcellular location is the cytoskeleton. The protein resides in the cell projection. It is found in the lamellipodium. It carries out the reaction L-seryl-[protein] + ATP = O-phospho-L-seryl-[protein] + ADP + H(+). The enzyme catalyses L-threonyl-[protein] + ATP = O-phospho-L-threonyl-[protein] + ADP + H(+). In terms of biological role, serine/threonine-protein kinase that plays an essential role in the regulation of actin filament dynamics. Acts downstream of several Rho family GTPase signal transduction pathways. Activated by upstream kinases including ROCK1, PAK1 and PAK4, which phosphorylate LIMK1 on a threonine residue located in its activation loop. LIMK1 subsequently phosphorylates and inactivates the actin binding/depolymerizing factors cofilin-1/CFL1, cofilin-2/CFL2 and destrin/DSTN, thereby preventing the cleavage of filamentous actin (F-actin), and stabilizing the actin cytoskeleton. In this way LIMK1 regulates several actin-dependent biological processes including cell motility, cell cycle progression, and differentiation. Phosphorylates TPPP on serine residues, thereby promoting microtubule disassembly. Stimulates axonal outgrowth and may be involved in brain development. The polypeptide is LIM domain kinase 1 (Limk1) (Rattus norvegicus (Rat)).